The primary structure comprises 108 residues: Large ribosomal subunit protein uL23 (108 aa).

Belongs to the universal ribosomal protein uL23 family. In terms of assembly, part of the 50S ribosomal subunit. Contacts protein L29, and trigger factor when it is bound to the ribosome.

Functionally, one of the early assembly proteins it binds 23S rRNA. One of the proteins that surrounds the polypeptide exit tunnel on the outside of the ribosome. Forms the main docking site for trigger factor binding to the ribosome. The polypeptide is Large ribosomal subunit protein uL23 (Polaromonas sp. (strain JS666 / ATCC BAA-500)).